The following is a 643-amino-acid chain: Threonine--tRNA ligase (643 aa).

In terms of domain architecture, TGS spans methionine 1–threonine 65. A catalytic region spans residues aspartate 246–proline 537. Zn(2+) is bound by residues cysteine 337, histidine 388, and histidine 514.

This sequence belongs to the class-II aminoacyl-tRNA synthetase family. Homodimer. Zn(2+) serves as cofactor.

It is found in the cytoplasm. The enzyme catalyses tRNA(Thr) + L-threonine + ATP = L-threonyl-tRNA(Thr) + AMP + diphosphate + H(+). Functionally, catalyzes the attachment of threonine to tRNA(Thr) in a two-step reaction: L-threonine is first activated by ATP to form Thr-AMP and then transferred to the acceptor end of tRNA(Thr). Also edits incorrectly charged L-seryl-tRNA(Thr). This chain is Threonine--tRNA ligase, found in Delftia acidovorans (strain DSM 14801 / SPH-1).